The primary structure comprises 456 residues: Bifunctional protein GlmU (456 aa).

The segment at 1–228 (MKLKAIILAA…YEDIMAVNSR (228 aa)) is pyrophosphorylase. Residues 8–11 (LAAG), Lys-22, Gln-72, 77–78 (GT), 99–101 (YGD), Gly-138, Glu-153, Asn-168, and Asn-226 each bind UDP-N-acetyl-alpha-D-glucosamine. Position 101 (Asp-101) interacts with Mg(2+). A Mg(2+)-binding site is contributed by Asn-226. The segment at 229–249 (EQLAEVEEVMQRRIVKKHMEA) is linker. The interval 250 to 456 (GVTFIDPQST…WVARKGVGKK (207 aa)) is N-acetyltransferase. The UDP-N-acetyl-alpha-D-glucosamine site is built by Arg-331 and Lys-349. His-361 serves as the catalytic Proton acceptor. Residues Tyr-364 and Asn-375 each contribute to the UDP-N-acetyl-alpha-D-glucosamine site. Residues 384 to 385 (NY), Ser-403, Ser-421, and Arg-438 each bind acetyl-CoA.

In the N-terminal section; belongs to the N-acetylglucosamine-1-phosphate uridyltransferase family. This sequence in the C-terminal section; belongs to the transferase hexapeptide repeat family. In terms of assembly, homotrimer. Mg(2+) is required as a cofactor.

The protein localises to the cytoplasm. The catalysed reaction is alpha-D-glucosamine 1-phosphate + acetyl-CoA = N-acetyl-alpha-D-glucosamine 1-phosphate + CoA + H(+). It catalyses the reaction N-acetyl-alpha-D-glucosamine 1-phosphate + UTP + H(+) = UDP-N-acetyl-alpha-D-glucosamine + diphosphate. Its pathway is nucleotide-sugar biosynthesis; UDP-N-acetyl-alpha-D-glucosamine biosynthesis; N-acetyl-alpha-D-glucosamine 1-phosphate from alpha-D-glucosamine 6-phosphate (route II): step 2/2. It participates in nucleotide-sugar biosynthesis; UDP-N-acetyl-alpha-D-glucosamine biosynthesis; UDP-N-acetyl-alpha-D-glucosamine from N-acetyl-alpha-D-glucosamine 1-phosphate: step 1/1. It functions in the pathway bacterial outer membrane biogenesis; LPS lipid A biosynthesis. Functionally, catalyzes the last two sequential reactions in the de novo biosynthetic pathway for UDP-N-acetylglucosamine (UDP-GlcNAc). The C-terminal domain catalyzes the transfer of acetyl group from acetyl coenzyme A to glucosamine-1-phosphate (GlcN-1-P) to produce N-acetylglucosamine-1-phosphate (GlcNAc-1-P), which is converted into UDP-GlcNAc by the transfer of uridine 5-monophosphate (from uridine 5-triphosphate), a reaction catalyzed by the N-terminal domain. The sequence is that of Bifunctional protein GlmU from Alkaliphilus metalliredigens (strain QYMF).